Consider the following 463-residue polypeptide: Fumarate hydratase class II (463 aa).

Substrate contacts are provided by residues 95 to 97, 126 to 129, 136 to 138, and Thr184; these read SGT, HPND, and SSN. The Proton donor/acceptor role is filled by His185. Ser315 is a catalytic residue. Substrate-binding positions include Ser316 and 321 to 323; that span reads KIN.

The protein belongs to the class-II fumarase/aspartase family. Fumarase subfamily. Homotetramer.

The protein resides in the cytoplasm. The enzyme catalyses (S)-malate = fumarate + H2O. Its pathway is carbohydrate metabolism; tricarboxylic acid cycle; (S)-malate from fumarate: step 1/1. In terms of biological role, involved in the TCA cycle. Catalyzes the stereospecific interconversion of fumarate to L-malate. The sequence is that of Fumarate hydratase class II from Chlamydia muridarum (strain MoPn / Nigg).